Reading from the N-terminus, the 152-residue chain is Endoribonuclease YbeY (152 aa).

Residues His-112, His-116, and His-122 each contribute to the Zn(2+) site.

It belongs to the endoribonuclease YbeY family. The cofactor is Zn(2+).

It localises to the cytoplasm. In terms of biological role, single strand-specific metallo-endoribonuclease involved in late-stage 70S ribosome quality control and in maturation of the 3' terminus of the 16S rRNA. This is Endoribonuclease YbeY from Pseudoalteromonas translucida (strain TAC 125).